We begin with the raw amino-acid sequence, 455 residues long: Regulatory protein LuxO (455 aa).

One can recognise a Response regulatory domain in the interval 1 to 112 (MVEDTASVAA…RLRVTVNNAI (112 aa)). A 4-aspartylphosphate modification is found at aspartate 47. Positions 132 to 361 (FIGSSQTMQA…LQNVLRNVVV (230 aa)) constitute a Sigma-54 factor interaction domain. ATP contacts are provided by residues 160-167 (GESGTGKE) and 223-232 (ADGGTLFLDE).

Functionally, involved in the regulation of different processes depending on the cell density. Acts together with sigma-54 to repress, perhaps indirectly, some genes. This is Regulatory protein LuxO (luxO) from Vibrio cholerae serotype O1 (strain ATCC 39315 / El Tor Inaba N16961).